The sequence spans 286 residues: MHVVVVTGLSGSGKSTAIKAFEDLDYFCIDNLPVPMLPEFLALCEKDMPDIHKIALGIDIRERKFLKDYAKIFQDLEESGYRFEIIFLEAATDTLQRRYSQTRRVHPAASSQSLLVDAIHQEREQLRALRSRATRIIDTGTLSVHQLKAMITRTYSMIGDTELLSIQVLSFGFKYGLPFEADMVMDVRFLPNPYFVEALKNLDGRSEEVSSWVLRWTATREFVEEYGALLLKLIPLYIREGKRYLTVAAGCTGGKHRSVVIAERIAGTLRDHNYFVNVFHRDLHLE.

8-15 (GLSGSGKS) is a binding site for ATP. Residue 59-62 (DIRE) coordinates GTP.

This sequence belongs to the RapZ-like family.

Functionally, displays ATPase and GTPase activities. The protein is Nucleotide-binding protein Sfum_2066 of Syntrophobacter fumaroxidans (strain DSM 10017 / MPOB).